We begin with the raw amino-acid sequence, 165 residues long: SsrA-binding protein (165 aa).

It belongs to the SmpB family.

Its subcellular location is the cytoplasm. Functionally, required for rescue of stalled ribosomes mediated by trans-translation. Binds to transfer-messenger RNA (tmRNA), required for stable association of tmRNA with ribosomes. tmRNA and SmpB together mimic tRNA shape, replacing the anticodon stem-loop with SmpB. tmRNA is encoded by the ssrA gene; the 2 termini fold to resemble tRNA(Ala) and it encodes a 'tag peptide', a short internal open reading frame. During trans-translation Ala-aminoacylated tmRNA acts like a tRNA, entering the A-site of stalled ribosomes, displacing the stalled mRNA. The ribosome then switches to translate the ORF on the tmRNA; the nascent peptide is terminated with the 'tag peptide' encoded by the tmRNA and targeted for degradation. The ribosome is freed to recommence translation, which seems to be the essential function of trans-translation. The polypeptide is SsrA-binding protein (Parvibaculum lavamentivorans (strain DS-1 / DSM 13023 / NCIMB 13966)).